The chain runs to 43 residues: Protein PsbN (43 aa).

Residues 5–27 (TLVAISISGLLVSFTGYALYTAF) traverse the membrane as a helical segment.

The protein belongs to the PsbN family.

The protein localises to the plastid. It localises to the chloroplast thylakoid membrane. May play a role in photosystem I and II biogenesis. This Eucalyptus globulus subsp. globulus (Tasmanian blue gum) protein is Protein PsbN.